The primary structure comprises 473 residues: Ribulose bisphosphate carboxylase large chain 1 (473 aa).

Positions 116 and 166 each coordinate substrate. Lysine 168 serves as the catalytic Proton acceptor. Position 170 (lysine 170) interacts with substrate. The Mg(2+) site is built by lysine 194, aspartate 196, and glutamate 197. Lysine 194 carries the post-translational modification N6-carboxylysine. Histidine 287 acts as the Proton acceptor in catalysis. Positions 288, 320, and 372 each coordinate substrate.

This sequence belongs to the RuBisCO large chain family. Type I subfamily. In terms of assembly, heterohexadecamer of 8 large chains and 8 small chains. It depends on Mg(2+) as a cofactor.

The catalysed reaction is 2 (2R)-3-phosphoglycerate + 2 H(+) = D-ribulose 1,5-bisphosphate + CO2 + H2O. It catalyses the reaction D-ribulose 1,5-bisphosphate + O2 = 2-phosphoglycolate + (2R)-3-phosphoglycerate + 2 H(+). Functionally, ruBisCO catalyzes two reactions: the carboxylation of D-ribulose 1,5-bisphosphate, the primary event in carbon dioxide fixation, as well as the oxidative fragmentation of the pentose substrate. Both reactions occur simultaneously and in competition at the same active site. The chain is Ribulose bisphosphate carboxylase large chain 1 from Nitrobacter winogradskyi (strain ATCC 25391 / DSM 10237 / CIP 104748 / NCIMB 11846 / Nb-255).